A 238-amino-acid polypeptide reads, in one-letter code: ATP synthase subunit a (238 aa).

5 helical membrane passes run 18–38, 76–96, 114–134, 166–186, and 193–213; these read LTLLAVCIVTILLIFGFVFWA, YSLLLFTIFLFVAVANNLGLF, NLAFDLALSLFVTLLVHIEGI, SLAIRLFGNIFAGEVVTGLIV, and LYWWPIAFLVNIAWTAFSIFI.

This sequence belongs to the ATPase A chain family. In terms of assembly, F-type ATPases have 2 components, CF(1) - the catalytic core - and CF(0) - the membrane proton channel. CF(1) has five subunits: alpha(3), beta(3), gamma(1), delta(1), epsilon(1). CF(0) has three main subunits: a(1), b(2) and c(9-12). The alpha and beta chains form an alternating ring which encloses part of the gamma chain. CF(1) is attached to CF(0) by a central stalk formed by the gamma and epsilon chains, while a peripheral stalk is formed by the delta and b chains.

The protein resides in the cell membrane. Functionally, key component of the proton channel; it plays a direct role in the translocation of protons across the membrane. The sequence is that of ATP synthase subunit a from Streptococcus equi subsp. zooepidemicus (strain H70).